Consider the following 1107-residue polypeptide: Integrator complex subunit 6 homolog (1107 aa).

The VWFA domain maps to Leu2–Met195. 5 disordered regions span residues Arg454–Leu515, Asp542–Ile572, Thr629–Pro801, Gln818–Asn861, and Val946–Asn1034. 2 stretches are compositionally biased toward low complexity: residues Gln460–Gly513 and Ser546–Gly562. Residues Thr629–Pro639 are compositionally biased toward basic and acidic residues. Residues Pro693 to Pro801 show a composition bias toward low complexity. Residues Ser846–Pro857 show a composition bias toward pro residues. The span at Pro956–Thr975 shows a compositional bias: low complexity. Polar residues predominate over residues Asn976 to Tyr996. The segment covering Asn997–Asn1034 has biased composition (low complexity). Residues Ile1041–Ile1103 form the MIF4G domain.

It belongs to the Integrator subunit 6 family. Component of the Integrator complex. The core complex associates with protein phosphatase 2A subunits, to form the Integrator-PP2A (INTAC) complex.

The protein resides in the nucleus. It is found in the chromosome. Its function is as follows. Component of the integrator complex, a multiprotein complex that terminates RNA polymerase II (Pol II) transcription in the promoter-proximal region of genes. The integrator complex provides a quality checkpoint during transcription elongation by driving premature transcription termination of transcripts that are unfavorably configured for transcriptional elongation: the complex terminates transcription by (1) catalyzing dephosphorylation of the C-terminal domain (CTD) of Pol II subunit polr2a, (2) degrading the exiting nascent RNA transcript via endonuclease activity and (3) promoting the release of Pol II from bound DNA. The integrator complex is also involved in terminating the synthesis of non-coding Pol II transcripts, such as enhancer RNAs (eRNAs), small nuclear RNAs (snRNAs), telomerase RNAs and long non-coding RNAs (lncRNAs). Within the integrator complex, INTS6 acts as a molecular adapter that promotes assembly of protein phosphatase 2A (PP2A) subunits to the integrator core complex, promoting recruitment of PP2A to transcription pause-release checkpoint. The polypeptide is Integrator complex subunit 6 homolog (ints6) (Dictyostelium discoideum (Social amoeba)).